The sequence spans 347 residues: NADH-ubiquinone oxidoreductase chain 2 (347 aa).

9 helical membrane-spanning segments follow: residues 3–23 (PLAL…TMMS), 59–79 (YFMT…INLM), 93–115 (VASN…HFWV), 150–170 (NTNL…WGGL), 178–198 (ILAY…PFNP), 199–219 (TLTL…FMIL), 242–262 (IMLM…GFMP), 274–294 (NSII…YFYM), and 326–346 (LPTL…ISML).

The protein belongs to the complex I subunit 2 family. Core subunit of respiratory chain NADH dehydrogenase (Complex I) which is composed of 45 different subunits. Interacts with TMEM242.

It localises to the mitochondrion inner membrane. The enzyme catalyses a ubiquinone + NADH + 5 H(+)(in) = a ubiquinol + NAD(+) + 4 H(+)(out). Core subunit of the mitochondrial membrane respiratory chain NADH dehydrogenase (Complex I) which catalyzes electron transfer from NADH through the respiratory chain, using ubiquinone as an electron acceptor. Essential for the catalytic activity and assembly of complex I. This chain is NADH-ubiquinone oxidoreductase chain 2, found in Loxodonta africana (African elephant).